A 355-amino-acid chain; its full sequence is Homeobox protein knotted-1-like 12 (355 aa).

Disordered stretches follow at residues 52–82 and 207–233; these read AAGP…GGGE and ECVG…PRAE. The segment covering 60–75 has biased composition (basic residues); it reads GHGHPHHGGGHHHSKH. Residues 218 to 233 are compositionally biased toward basic and acidic residues; that stretch reads PSGRENEPPEIDPRAE. Positions 236-256 constitute an ELK domain; that stretch reads ELKFQLLKKYSGYLSSLRQEF. The homeobox; TALE-type DNA-binding region spans 257–320; that stretch reads SKKKKKGKLP…NQRKRHWKPS (64 aa).

It belongs to the TALE/KNOX homeobox family. Expressed in stems, rachis and inflorescence.

The protein localises to the nucleus. Functionally, probable transcription factor that may be involved in shoot formation during embryogenesis. The chain is Homeobox protein knotted-1-like 12 (OSH15) from Oryza sativa subsp. japonica (Rice).